The sequence spans 159 residues: uncharacterized protein (159 aa).

The protein belongs to the mimivirus L15/L51/R83 family.

This is an uncharacterized protein from Acanthamoeba polyphaga mimivirus (APMV).